Reading from the N-terminus, the 60-residue chain is Putative mercuric resistance protein (60 aa).

This Shigella flexneri protein is Putative mercuric resistance protein.